The sequence spans 173 residues: Bifunctional protein PyrR (173 aa).

The short motif at 93–105 is the PRPP-binding element; the sequence is VILIDDVLYTGRT.

This sequence belongs to the purine/pyrimidine phosphoribosyltransferase family. PyrR subfamily. As to quaternary structure, homodimer and homohexamer; in equilibrium.

It carries out the reaction UMP + diphosphate = 5-phospho-alpha-D-ribose 1-diphosphate + uracil. In terms of biological role, regulates transcriptional attenuation of the pyrimidine nucleotide (pyr) operon by binding in a uridine-dependent manner to specific sites on pyr mRNA. This disrupts an antiterminator hairpin in the RNA and favors formation of a downstream transcription terminator, leading to a reduced expression of downstream genes. Its function is as follows. Also displays a weak uracil phosphoribosyltransferase activity which is not physiologically significant. The polypeptide is Bifunctional protein PyrR (Streptococcus pyogenes serotype M49 (strain NZ131)).